Reading from the N-terminus, the 270-residue chain is Putative carboxymethylenebutenolidase (270 aa).

Residues Cys147, Asp204, and His236 contribute to the active site.

It belongs to the dienelactone hydrolase family.

It catalyses the reaction 2-(5-oxo-2,5-dihydrofuran-2-ylidene)acetate + H2O = 4-oxohex-2-enedioate + H(+). The polypeptide is Putative carboxymethylenebutenolidase (ysgA) (Salmonella typhimurium (strain LT2 / SGSC1412 / ATCC 700720)).